Here is a 189-residue protein sequence, read N- to C-terminus: Shikimate kinase (189 aa).

22–27 (ASGKST) contacts ATP. Residue Ser26 participates in Mg(2+) binding. Residues Asp44, Arg68, and Gly90 each contribute to the substrate site. ATP is bound at residue Arg128. Arg147 is a binding site for substrate.

Belongs to the shikimate kinase family. As to quaternary structure, monomer. It depends on Mg(2+) as a cofactor.

Its subcellular location is the cytoplasm. The catalysed reaction is shikimate + ATP = 3-phosphoshikimate + ADP + H(+). It functions in the pathway metabolic intermediate biosynthesis; chorismate biosynthesis; chorismate from D-erythrose 4-phosphate and phosphoenolpyruvate: step 5/7. In terms of biological role, catalyzes the specific phosphorylation of the 3-hydroxyl group of shikimic acid using ATP as a cosubstrate. This is Shikimate kinase from Synechococcus sp. (strain JA-3-3Ab) (Cyanobacteria bacterium Yellowstone A-Prime).